A 644-amino-acid polypeptide reads, in one-letter code: Adhesion G-protein coupled receptor F2 (644 aa).

An N-terminal signal peptide occupies residues 1–18; the sequence is MIPAHWLYCLMLLLPIES. At 19–386 the chain is on the extracellular side; that stretch reads CRILCQASSK…ESPVLTYITY (368 aa). N155, N219, N293, and N311 each carry an N-linked (GlcNAc...) asparagine glycan. Residues 233 to 377 enclose the GAIN-B domain; the sequence is SRGSLGKNFT…SILMSPNTLE (145 aa). Cystine bridges form between C329/C356 and C344/C358. The interval 329–377 is GPS; it reads CVGWHSLESRWDWRACKTIQENSRQAVCRCRPNKLYTSFSILMSPNTLE. Residues 387-407 traverse the membrane as a helical segment; sequence IGLGISICSLIICLAIEVLVW. The Cytoplasmic portion of the chain corresponds to 408–422; sequence SQVTKTEISYLRHLC. A helical membrane pass occupies residues 423–443; sequence IANIAATLLMADAWFIVASFL. Residues 444-465 lie on the Extracellular side of the membrane; it reads SGPVLHHNGCVAATFFVHFFYL. The helical transmembrane segment at 466-486 threads the bilayer; the sequence is SVFFWMLAKALLILYGILIVF. Residues 487 to 493 are Cytoplasmic-facing; the sequence is HTLPKSC. Residues 494 to 514 form a helical membrane-spanning segment; the sequence is LVASLFSVGYGCPLVIAIITL. Residues 515–541 lie on the Extracellular side of the membrane; sequence AVTEPGKGYLRPEACWLNWDMTKALLA. Residues 542–562 traverse the membrane as a helical segment; sequence FVVPALAIVVVNLITVTMVII. Topologically, residues 563-585 are cytoplasmic; it reads KTQRAAIGSSMFQEVRAIVRICK. The chain crosses the membrane as a helical span at residues 586-606; it reads NIAILTPLLGLTWGFGIATVI. Residues 607–610 lie on the Extracellular side of the membrane; the sequence is NGHS. The helical transmembrane segment at 611–631 threads the bilayer; it reads LAFHIIFSLLNALQVSPDAAV.

It belongs to the G-protein coupled receptor 2 family. Adhesion G-protein coupled receptor (ADGR) subfamily. In terms of tissue distribution, mainly expressed in skin and heart, and very weakly in lung and spleen. Detected in all epidermal layers of skin.

The protein resides in the membrane. Orphan receptor. This chain is Adhesion G-protein coupled receptor F2 (Adgrf2), found in Mus musculus (Mouse).